A 281-amino-acid polypeptide reads, in one-letter code: Ribosomal protein L11 methyltransferase (281 aa).

S-adenosyl-L-methionine is bound by residues threonine 133, glycine 154, aspartate 175, and asparagine 216.

The protein belongs to the methyltransferase superfamily. PrmA family.

It localises to the cytoplasm. It carries out the reaction L-lysyl-[protein] + 3 S-adenosyl-L-methionine = N(6),N(6),N(6)-trimethyl-L-lysyl-[protein] + 3 S-adenosyl-L-homocysteine + 3 H(+). Its function is as follows. Methylates ribosomal protein L11. The chain is Ribosomal protein L11 methyltransferase from Campylobacter jejuni subsp. jejuni serotype O:23/36 (strain 81-176).